The following is a 209-amino-acid chain: UPF0502 protein PSHAa0076 (209 aa).

This sequence belongs to the UPF0502 family.

The protein is UPF0502 protein PSHAa0076 of Pseudoalteromonas translucida (strain TAC 125).